Here is a 250-residue protein sequence, read N- to C-terminus: Heme oxygenase 2 (250 aa).

His16 provides a ligand contact to heme b. Residues 228-250 (QDRPGSTEARSTAGHPITLMVGE) form a disordered region.

This sequence belongs to the heme oxygenase family. Homodimer.

It carries out the reaction heme b + 3 reduced [NADPH--hemoprotein reductase] + 3 O2 = biliverdin IXalpha + CO + Fe(2+) + 3 oxidized [NADPH--hemoprotein reductase] + 3 H2O + H(+). Its function is as follows. Catalyzes the opening of the heme ring with the release of iron. Key enzyme in the synthesis of the chromophoric part of the photosynthetic antennae. This Synechocystis sp. (strain ATCC 27184 / PCC 6803 / Kazusa) protein is Heme oxygenase 2 (pbsA2).